Reading from the N-terminus, the 553-residue chain is Mannuronan C5-epimerase AlgE4 (553 aa).

PbH1 repeat units follow at residues 133 to 155 (DRDV…DPHE), 157 to 179 (TINL…VADY), 180 to 202 (LVDS…NVVT), 204 to 226 (THDF…VVQR), 234 to 256 (PSNI…LLKM), 257 to 279 (TSDI…RVYG), 280 to 301 (AQDV…AVPE), and 320 to 342 (TLNT…GIQE). The disordered stretch occupies residues 367 to 427 (YGPHSTVSGE…DILDGGAGRD (61 aa)). Hemolysin-type calcium-binding repeat units follow at residues 403-420 (QGGS…DDIL) and 421-438 (DGGA…ADTF).

It belongs to the D-mannuronate C5-epimerase family. The cofactor is Ca(2+).

The protein resides in the secreted. The enzyme catalyses [(1-&gt;4)-beta-D-mannuronosyl](n) = [alginate](n). Its pathway is glycan biosynthesis; alginate biosynthesis. Its activity is regulated as follows. Inhibited by zinc. In terms of biological role, converts beta-D-mannuronic acid (M) to alpha-L-guluronic acid (G), but introduces almost exclusively MG blocks, producing a polymer with non-gel-forming capacity. The sequence is that of Mannuronan C5-epimerase AlgE4 from Azotobacter vinelandii.